A 109-amino-acid polypeptide reads, in one-letter code: Large ribosomal subunit protein uL24 (109 aa).

It belongs to the universal ribosomal protein uL24 family. In terms of assembly, part of the 50S ribosomal subunit.

Functionally, one of two assembly initiator proteins, it binds directly to the 5'-end of the 23S rRNA, where it nucleates assembly of the 50S subunit. In terms of biological role, one of the proteins that surrounds the polypeptide exit tunnel on the outside of the subunit. This Ehrlichia ruminantium (strain Gardel) protein is Large ribosomal subunit protein uL24.